Consider the following 129-residue polypeptide: Large ribosomal subunit protein eL32 (129 aa).

This sequence belongs to the eukaryotic ribosomal protein eL32 family.

This Archaeoglobus fulgidus (strain ATCC 49558 / DSM 4304 / JCM 9628 / NBRC 100126 / VC-16) protein is Large ribosomal subunit protein eL32 (rpl32e).